The sequence spans 932 residues: GPI ethanolamine phosphate transferase 1 (932 aa).

Topologically, residues 1–8 (MISLNKKL) are cytoplasmic. The chain crosses the membrane as a helical span at residues 9 to 29 (VLLVGVIFHVAFMWSIFDIYF). Over 30 to 456 (VSPLIHGMKH…TYNWLFLRTL (427 aa)) the chain is Lumenal. 3 N-linked (GlcNAc...) asparagine glycosylation sites follow: asparagine 138, asparagine 202, and asparagine 360. The helical transmembrane segment at 457–477 (VTIGFFGWIAVAFCSYLLAFV) threads the bilayer. Residues 478–486 (VQSDKPFTT) are Cytoplasmic-facing. Residues 487 to 507 (SLPLKGVAYVALAILSGFFVF) form a helical membrane-spanning segment. Residues 508 to 509 (QK) lie on the Lumenal side of the membrane. The chain crosses the membrane as a helical span at residues 510–530 (SPLHYHLYAVFPVVFWEAVLQ). Residues 531–551 (RRTAVAEGISILARRSTSKAP) lie on the Cytoplasmic side of the membrane. The helical transmembrane segment at 552–572 (ALAAILDIGLSLVLLEAIVYG) threads the bilayer. The Lumenal segment spans residues 573–577 (YFHRE). Residues 578 to 598 (IFSVCFGLATLWPFVHNFTVA) traverse the membrane as a helical segment. At 599-603 (KREWP) the chain is on the cytoplasmic side. The helical transmembrane segment at 604–624 (TTLAWVVMCAIMSSFTLLEVV) threads the bilayer. Residues 625–627 (KVE) are Lumenal-facing. A helical transmembrane segment spans residues 628–648 (SIEQILLSGALMLVIGLVFTI). Residues 649 to 653 (HLQRK) are Cytoplasmic-facing. The helical transmembrane segment at 654–674 (LALAASTVCVLFAQILLVVAT) threads the bilayer. The Lumenal segment spans residues 675 to 696 (MYFTRESVESLTARNGLPLFSQ). A helical transmembrane segment spans residues 697–717 (VGGWISLLLSLAVPFLHFLGS). The Cytoplasmic segment spans residues 718-737 (DAKDYRLRLLIIFLAFGPTF). A helical membrane pass occupies residues 738-758 (VILTISWEGFFYVCFFAILVI). Residues 759 to 786 (WIELETQMRDARVTPQTRADLTPGDFRM) lie on the Lumenal side of the membrane. A helical membrane pass occupies residues 787-807 (ALFTFFMSQIGFFGIGNIASI). Over 808–828 (SSFSLDSVYRLIPVFDPFSMG) the chain is Cytoplasmic. Residues 829–849 (ALLMFKILVPFAVLSACLGIL) traverse the membrane as a helical segment. Residues 850 to 859 (NLKLGVPPSA) are Lumenal-facing. The chain crosses the membrane as a helical span at residues 860 to 880 (LFSMVLCVSDILTLNFFYLVV). Topologically, residues 881–900 (DEGSWLDIGTGISHYCIASG) are cytoplasmic. The chain crosses the membrane as a helical span at residues 901 to 921 (LSLFMMVLEYLSGVLVAGVTI). The Lumenal portion of the chain corresponds to 922-932 (APHVSKIKKDM).

This sequence belongs to the PIGG/PIGN/PIGO family. PIGN subfamily.

It localises to the endoplasmic reticulum membrane. It participates in glycolipid biosynthesis; glycosylphosphatidylinositol-anchor biosynthesis. Its function is as follows. Ethanolamine phosphate transferase involved in glycosylphosphatidylinositol-anchor biosynthesis. Transfers ethanolamine phosphate to the first alpha-1,4-linked mannose of the glycosylphosphatidylinositol precursor of GPI-anchor. This chain is GPI ethanolamine phosphate transferase 1 (MCD4), found in Yarrowia lipolytica (strain CLIB 122 / E 150) (Yeast).